Consider the following 394-residue polypeptide: 8-amino-7-oxononanoate synthase (394 aa).

Arginine 22 is a substrate binding site. 113-114 serves as a coordination point for pyridoxal 5'-phosphate; sequence GY. A substrate-binding site is contributed by histidine 138. 3 residues coordinate pyridoxal 5'-phosphate: serine 184, histidine 212, and threonine 240. Lysine 243 carries the post-translational modification N6-(pyridoxal phosphate)lysine. Threonine 359 lines the substrate pocket.

Belongs to the class-II pyridoxal-phosphate-dependent aminotransferase family. BioF subfamily. In terms of assembly, homodimer. The cofactor is pyridoxal 5'-phosphate.

It carries out the reaction 6-carboxyhexanoyl-[ACP] + L-alanine + H(+) = (8S)-8-amino-7-oxononanoate + holo-[ACP] + CO2. Its pathway is cofactor biosynthesis; biotin biosynthesis. Functionally, catalyzes the decarboxylative condensation of pimeloyl-[acyl-carrier protein] and L-alanine to produce 8-amino-7-oxononanoate (AON), [acyl-carrier protein], and carbon dioxide. The polypeptide is 8-amino-7-oxononanoate synthase (Janthinobacterium sp. (strain Marseille) (Minibacterium massiliensis)).